Here is a 297-residue protein sequence, read N- to C-terminus: Protease HtpX homolog (297 aa).

2 helical membrane-spanning segments follow: residues 14–34 and 38–58; these read IVLL…VGYL and SLET…IIMV. H144 lines the Zn(2+) pocket. E145 is a catalytic residue. H148 provides a ligand contact to Zn(2+). Transmembrane regions (helical) follow at residues 159–179 and 199–219; these read IALA…NWWF and ILLL…AAAI. E228 contributes to the Zn(2+) binding site.

The protein belongs to the peptidase M48B family. Requires Zn(2+) as cofactor.

Its subcellular location is the cell membrane. The sequence is that of Protease HtpX homolog from Leuconostoc mesenteroides subsp. mesenteroides (strain ATCC 8293 / DSM 20343 / BCRC 11652 / CCM 1803 / JCM 6124 / NCDO 523 / NBRC 100496 / NCIMB 8023 / NCTC 12954 / NRRL B-1118 / 37Y).